The sequence spans 71 residues: Metallothionein-like protein 1 (71 aa).

This sequence belongs to the metallothionein superfamily. Type 15 family.

Metallothioneins have a high content of cysteine residues that bind various heavy metals. This Casuarina glauca (Swamp oak) protein is Metallothionein-like protein 1 (MT1).